Consider the following 236-residue polypeptide: Pyridoxine 5'-phosphate synthase (236 aa).

Asparagine 7 contributes to the 3-amino-2-oxopropyl phosphate binding site. 9-10 contacts 1-deoxy-D-xylulose 5-phosphate; it reads DH. Arginine 18 is a binding site for 3-amino-2-oxopropyl phosphate. The active-site Proton acceptor is the histidine 43. Residues arginine 45 and histidine 50 each contribute to the 1-deoxy-D-xylulose 5-phosphate site. Glutamate 69 functions as the Proton acceptor in the catalytic mechanism. Residue threonine 99 coordinates 1-deoxy-D-xylulose 5-phosphate. Residue histidine 190 is the Proton donor of the active site. 3-amino-2-oxopropyl phosphate contacts are provided by residues glycine 191 and 212–213; that span reads GH.

Belongs to the PNP synthase family. In terms of assembly, homooctamer; tetramer of dimers.

It is found in the cytoplasm. It catalyses the reaction 3-amino-2-oxopropyl phosphate + 1-deoxy-D-xylulose 5-phosphate = pyridoxine 5'-phosphate + phosphate + 2 H2O + H(+). It participates in cofactor biosynthesis; pyridoxine 5'-phosphate biosynthesis; pyridoxine 5'-phosphate from D-erythrose 4-phosphate: step 5/5. Its function is as follows. Catalyzes the complicated ring closure reaction between the two acyclic compounds 1-deoxy-D-xylulose-5-phosphate (DXP) and 3-amino-2-oxopropyl phosphate (1-amino-acetone-3-phosphate or AAP) to form pyridoxine 5'-phosphate (PNP) and inorganic phosphate. In Desulfosudis oleivorans (strain DSM 6200 / JCM 39069 / Hxd3) (Desulfococcus oleovorans), this protein is Pyridoxine 5'-phosphate synthase.